A 610-amino-acid chain; its full sequence is MTRPQAAAEDARNAMVAGLLASGISVNGLQPSHNPQVAAQMFTTATRLDPKMCDAWLARLLAGDQSIEVLAGAWAAVRTFGWETRRLGVTDLQFRPEVSDGLFLRLAITSVDSLACAYAAVLAEAKRYQEAAELLDATDPRHPFDAELVSYVRGVLYFRTKRWPDVLAQFPEATQWRHPELKAAGAAMATTALASLGVFEEAFRRAQEAIEGDRVPGAANIALYTQGMCLRHVGREEEAVELLRRVYSRDAKFTPAREALDNPNFRLILTDPETIEARTDPWDPDSAPTRAQTEAARHAEMAAKYLAEGDAELNAMLGMEQAKKEIKLIKSTTKVNLARAKMGLPVPVTSRHTLLLGPPGTGKTSVARAFTKQLCGLTVLRKPLVVETSRTKLLGRYMADAEKNTEEMLEGALGGAVFFDEMHTLHEKGYSQGDPYGNAIINTLLLYMENHRDELVVFGAGYAKAMEKMLEVNQGLRRRFSTVIEFFSYTPQELIALTQLMGRENEDVITEEESQVLLPSYTKFYMEQSYSEDGDLIRGIDLLGNAGFVRNVVEKARDHRSFRLDDEDLDAVLASDLTEFSEDQLRRFKELTREDLAEGLRAAVAEKKTK.

Position 357 to 364 (G357 to T364) interacts with ATP.

Belongs to the CbxX/CfxQ family. In terms of assembly, part of the ESX-5 / type VII secretion system (T7SS), which is composed of cytosolic and membrane components.

The protein localises to the cytoplasm. Its function is as follows. Part of an ESX-5 / type VII specialized secretion system (T7SS), which exports several proteins. EccA5 exhibits ATPase activity and may provide energy for the export of ESX-5 substrates. The polypeptide is ESX-5 secretion system protein EccA5 (Mycobacterium bovis (strain ATCC BAA-935 / AF2122/97)).